Reading from the N-terminus, the 629-residue chain is MQFHERFDVIVVGGGHAGTEAALAAARMGCKTLLLTHNVDTLGQMSCNPAIGGIGKGHLVKEIDALGGAMAIATDFSGIQFRTLNSSKGPAVRATRAQADRALYKAKILNILQHQPNLRIFQQAVDDLVVENGRVIGAVTQMGLAFEAPAVVLTAGTFLGGKIHIGLENYSGGRAGDQPAIALAHRLRDLPLRVGRLKTGTPPRIDARTIDFSVMTEQKGDTPLPVMSFIGDLSQHPEQISCYITHTNEQTHDIIRGGLDRSPMYSGVIEGIGPRYCPSIEDKIHRFADKNSHQIFIEPEGLTTTEIYPNGISTSLPFDVQIQLVRSIRGMEQAEIVRPGYAIEYDYFDPRDLKNSLETKVIDGLFFAGQINGTTGYEEAGAQGLLAGLNAALQVQGKEAWAPRRDQAYLGVLVDDLSTLGTKEPYRMFTSRAEYRLLLREDNADLRLTEKGRELGLVDDFRWQKFSEKRESIELEQQRLRGQWVHVNSPQVAELNEVLSAPLTREASLEDLLRRPEIEYDTLMKVDGFGPGLADPLAAEQVQIQVKYAGYIQRQQDEIAKAERNENTRLPLDLDYSEVPGLSNEVTAKLNAHKPETIGQASRISGVTPAAVSILLVHLKKRGLLRKSA.

An FAD-binding site is contributed by 13-18; the sequence is GGGHAG. 273–287 provides a ligand contact to NAD(+); it reads GPRYCPSIEDKIHRF.

It belongs to the MnmG family. As to quaternary structure, homodimer. Heterotetramer of two MnmE and two MnmG subunits. FAD is required as a cofactor.

It is found in the cytoplasm. NAD-binding protein involved in the addition of a carboxymethylaminomethyl (cmnm) group at the wobble position (U34) of certain tRNAs, forming tRNA-cmnm(5)s(2)U34. In Shewanella amazonensis (strain ATCC BAA-1098 / SB2B), this protein is tRNA uridine 5-carboxymethylaminomethyl modification enzyme MnmG.